The primary structure comprises 412 residues: Multifunctional CCA protein (412 aa).

2 residues coordinate ATP: Gly8 and Arg11. CTP contacts are provided by Gly8 and Arg11. The Mg(2+) site is built by Asp21 and Asp23. Positions 91, 137, and 140 each coordinate ATP. CTP-binding residues include Arg91, Arg137, and Arg140. The HD domain occupies Thr228–Trp329.

Belongs to the tRNA nucleotidyltransferase/poly(A) polymerase family. Bacterial CCA-adding enzyme type 1 subfamily. Monomer. Can also form homodimers and oligomers. Mg(2+) is required as a cofactor. Requires Ni(2+) as cofactor.

The enzyme catalyses a tRNA precursor + 2 CTP + ATP = a tRNA with a 3' CCA end + 3 diphosphate. The catalysed reaction is a tRNA with a 3' CCA end + 2 CTP + ATP = a tRNA with a 3' CCACCA end + 3 diphosphate. Functionally, catalyzes the addition and repair of the essential 3'-terminal CCA sequence in tRNAs without using a nucleic acid template. Adds these three nucleotides in the order of C, C, and A to the tRNA nucleotide-73, using CTP and ATP as substrates and producing inorganic pyrophosphate. tRNA 3'-terminal CCA addition is required both for tRNA processing and repair. Also involved in tRNA surveillance by mediating tandem CCA addition to generate a CCACCA at the 3' terminus of unstable tRNAs. While stable tRNAs receive only 3'-terminal CCA, unstable tRNAs are marked with CCACCA and rapidly degraded. The chain is Multifunctional CCA protein from Escherichia coli O6:K15:H31 (strain 536 / UPEC).